The primary structure comprises 234 residues: Coiled-coil domain-containing protein 194 (234 aa).

An N-terminal signal peptide occupies residues 1–42; the sequence is MAEPGPEPGRAWRVLALCGVAVFLAAAAAGGALVAWNLAASA. 2 disordered regions span residues 44-67 and 187-234; these read RGPR…PGVD and VLEA…RARG. Positions 66–163 form a coiled coil; that stretch reads VDDLRRRLAE…TRRLDEALRR (98 aa). A compositionally biased stretch (low complexity) spans 187–196; sequence VLEAEMSPQR. Residues 197–217 are compositionally biased toward basic residues; it reads RVPRPRPRSGSRPRPSPRSRS.

The polypeptide is Coiled-coil domain-containing protein 194 (Homo sapiens (Human)).